Consider the following 189-residue polypeptide: Transcription factor FapR (189 aa).

Belongs to the FapR family.

Functionally, transcriptional factor involved in regulation of membrane lipid biosynthesis by repressing genes involved in fatty acid and phospholipid metabolism. The chain is Transcription factor FapR from Listeria innocua serovar 6a (strain ATCC BAA-680 / CLIP 11262).